Here is a 1171-residue protein sequence, read N- to C-terminus: Putative tricorn protease homolog 2 (1171 aa).

Residues 432–498 (AGYPPDAGDE…GSPGTPATAG (67 aa)) form a disordered region. Composition is skewed to low complexity over residues 444-456 (AGTAARADSAPDA) and 466-498 (IAAGTGTGDIADADAAAGGTVTPGSPGTPATAG). His-827 (charge relay system) is an active-site residue. Residues 842–941 (YQRWQGLLGA…RVAVVPLVDE (100 aa)) form a PDZ-like region. Residue 1002-1004 (AGG) coordinates substrate. The Nucleophile role is filled by Ser-1051. 1079–1081 (GMT) is a binding site for substrate. Glu-1109 functions as the Charge relay system in the catalytic mechanism. The disordered stretch occupies residues 1149–1171 (PPATPPGYEAVPDRSRPPLPPRE). Over residues 1159–1171 (VPDRSRPPLPPRE) the composition is skewed to basic and acidic residues.

It belongs to the peptidase S41B family.

The protein resides in the cytoplasm. Degrades oligopeptides in a sequential manner. The chain is Putative tricorn protease homolog 2 (tri2) from Streptomyces coelicolor (strain ATCC BAA-471 / A3(2) / M145).